Consider the following 251-residue polypeptide: Lactose phosphotransferase system repressor (251 aa).

The HTH deoR-type domain maps to 3–58 (KYDRLDEITKLVNKRGSVRTNEIVEDLNVSDMTVRRDLAELEEKGVLTKIHGGARS). The segment at residues 20-39 (VRTNEIVEDLNVSDMTVRRD) is a DNA-binding region (H-T-H motif).

Functionally, repressor of the lactose catabolism operon. Galactose-6-phosphate is the inducer. This is Lactose phosphotransferase system repressor (lacR) from Staphylococcus epidermidis (strain ATCC 35984 / DSM 28319 / BCRC 17069 / CCUG 31568 / BM 3577 / RP62A).